Here is a 165-residue protein sequence, read N- to C-terminus: Nucleotide-binding protein CHY_1197 (165 aa).

It belongs to the YajQ family.

Nucleotide-binding protein. In Carboxydothermus hydrogenoformans (strain ATCC BAA-161 / DSM 6008 / Z-2901), this protein is Nucleotide-binding protein CHY_1197.